The sequence spans 256 residues: MRILLTNDDGIHAEGLSVLERIARTITDDVWVVAPEVDQSGLAHSLTLSEPLRLRPVSERRFALRGTPTDCVIMAVKKILDRKPDLVLSGVNIGANLADDVTYSGTVAGAIEGTLQGIRSMALSQAYHYAVGREVPWDVAETHAPALIRTLMDVDLPDGTLVNLNFPNCAVDSVAGVEVTSQGKLDFGLSIDERTDGRGFPYFWLRFGERAGDFRSGTDIRALRDNKISVTPLKLDMTDHAVQDLIARALRKGTVA.

4 residues coordinate a divalent metal cation: Asp-8, Asp-9, Ser-40, and Asn-92.

It belongs to the SurE nucleotidase family. It depends on a divalent metal cation as a cofactor.

It is found in the cytoplasm. It catalyses the reaction a ribonucleoside 5'-phosphate + H2O = a ribonucleoside + phosphate. In terms of biological role, nucleotidase that shows phosphatase activity on nucleoside 5'-monophosphates. The chain is 5'-nucleotidase SurE from Sinorhizobium medicae (strain WSM419) (Ensifer medicae).